A 379-amino-acid chain; its full sequence is Chaperone protein DnaJ (379 aa).

Positions 5 to 70 (DYYEILEVSR…EKRAAYDRYG (66 aa)) constitute a J domain. The CR-type zinc finger occupies 135–213 (GIKVPISYVT…CGGSGRVRNE (79 aa)). 8 residues coordinate Zn(2+): Cys-148, Cys-151, Cys-165, Cys-168, Cys-187, Cys-190, Cys-201, and Cys-204. CXXCXGXG motif repeat units follow at residues 148–155 (CSSCSGIG), 165–172 (CGNCNGAG), 187–194 (CNVCNGEG), and 201–208 (CRRCGGSG).

This sequence belongs to the DnaJ family. Homodimer. Zn(2+) serves as cofactor.

The protein localises to the cytoplasm. Participates actively in the response to hyperosmotic and heat shock by preventing the aggregation of stress-denatured proteins and by disaggregating proteins, also in an autonomous, DnaK-independent fashion. Unfolded proteins bind initially to DnaJ; upon interaction with the DnaJ-bound protein, DnaK hydrolyzes its bound ATP, resulting in the formation of a stable complex. GrpE releases ADP from DnaK; ATP binding to DnaK triggers the release of the substrate protein, thus completing the reaction cycle. Several rounds of ATP-dependent interactions between DnaJ, DnaK and GrpE are required for fully efficient folding. Also involved, together with DnaK and GrpE, in the DNA replication of plasmids through activation of initiation proteins. This Anaplasma marginale (strain Florida) protein is Chaperone protein DnaJ.